We begin with the raw amino-acid sequence, 438 residues long: Plasmalemma vesicle-associated protein (438 aa).

Over 1-26 the chain is Cytoplasmic; it reads MGLSMDRSPYSRTGDRDRGCWYYLRY. The helical; Signal-anchor for type II membrane protein transmembrane segment at 27 to 47 threads the bilayer; that stretch reads FFLFVSLIQFLIILGLVLFMI. At 48–438 the chain is on the extracellular side; that stretch reads YGNVHATTES…LVNPAVPPSG (391 aa). Residues Asn82, Asn88, Asn112, and Asn150 are each glycosylated (N-linked (GlcNAc...) asparagine). The stretch at 289–383 forms a coiled coil; that stretch reads AGIERVTREN…TEVDVRISAL (95 aa). Residues 393 to 438 are disordered; it reads PAIQPRLPGPPPNPPPIDPASLEEFKKRILESQRPPLVNPAVPPSG. 2 stretches are compositionally biased toward pro residues: residues 399 to 410 and 429 to 438; these read LPGPPPNPPPID and LVNPAVPPSG.

Homodimer. Expressed in lung (alveolar endothelial and bronchial epithelial cells), kidney (endothelium of peritubular capillaries), spleen, liver, adrenal (endothelial cells of the zona reticularis of the cortex and chromaffin cells in the medulla), pancreas (islets of Langerhans), testis (germ cells, interstitial cells in neonatal testis and spermatids), ovary (stromal endothelial, thecal layer of developing follicles, luteal cells within the corpus luteum), intestine (endothelium of capillaries of the intestinal villi) and pituitary (pituicyte cells in the neural lobe) (at protein level). Expressed in lung, kidney, spleen, liver, adrenal, testis, heart, muscle, pituitary, thyroid and ovary.

The protein resides in the cell membrane. The protein localises to the membrane. Its subcellular location is the caveola. It is found in the cytoplasm. It localises to the perinuclear region. In terms of biological role, endothelial cell-specific membrane protein involved in the formation of the diaphragms that bridge endothelial fenestrae. It is also required for the formation of stomata of caveolae and transendothelial channels. Functions in microvascular permeability, endothelial fenestrae contributing to the passage of water and solutes and regulating transcellular versus paracellular flow in different organs. Plays a specific role in embryonic development. This Rattus norvegicus (Rat) protein is Plasmalemma vesicle-associated protein (Plvap).